A 317-amino-acid polypeptide reads, in one-letter code: MPVQGSQRRLLGSLNSTPTATPKLGLAANQTGAWCLEVSIPDGLFLSLGLVSLVENVLVVAAIAKNRNLHSPMYCFICCLALSDLLVSGSNMLETAVILLLEAGALAARAAVVQQLDNVIDVITCSSMLSSLCFLGAIAVDRYISIFYALRYHSIVTLPRAQRVVAAIWVASVLFSTLFIAYYDHAAVLLCLVVFFLAMLVLMAVLYVHMLARACQHAQGIAQLHKRQRPAHQGFGLKGAATLTILLGIFFLCWGPFFLHLTLIVLCPQHPTCSCIFKNFNLFLALIICNAIIDPLIYAFRSQELRRTLKEVLLCSW.

Topologically, residues 1 to 37 (MPVQGSQRRLLGSLNSTPTATPKLGLAANQTGAWCLE) are extracellular. N-linked (GlcNAc...) asparagine glycosylation is present at asparagine 29. A helical membrane pass occupies residues 38–63 (VSIPDGLFLSLGLVSLVENVLVVAAI). Topologically, residues 64 to 72 (AKNRNLHSP) are cytoplasmic. A helical transmembrane segment spans residues 73-93 (MYCFICCLALSDLLVSGSNML). The Extracellular segment spans residues 94–118 (ETAVILLLEAGALAARAAVVQQLDN). A helical transmembrane segment spans residues 119-140 (VIDVITCSSMLSSLCFLGAIAV). Residues 141 to 163 (DRYISIFYALRYHSIVTLPRAQR) are Cytoplasmic-facing. Residues 164 to 183 (VVAAIWVASVLFSTLFIAYY) traverse the membrane as a helical segment. The Extracellular portion of the chain corresponds to 184-191 (DHAAVLLC). A helical transmembrane segment spans residues 192-211 (LVVFFLAMLVLMAVLYVHML). Residues 212–240 (ARACQHAQGIAQLHKRQRPAHQGFGLKGA) lie on the Cytoplasmic side of the membrane. A helical transmembrane segment spans residues 241–266 (ATLTILLGIFFLCWGPFFLHLTLIVL). Topologically, residues 267-279 (CPQHPTCSCIFKN) are extracellular. A helical transmembrane segment spans residues 280–300 (FNLFLALIICNAIIDPLIYAF). At 301-317 (RSQELRRTLKEVLLCSW) the chain is on the cytoplasmic side. Cysteine 315 carries the S-palmitoyl cysteine lipid modification.

It belongs to the G-protein coupled receptor 1 family. Interacts with MGRN1, but does not undergo MGRN1-mediated ubiquitination; this interaction competes with GNAS-binding and thus inhibits agonist-induced cAMP production. Interacts with OPN3; the interaction results in a decrease in MC1R-mediated cAMP signaling and ultimately a decrease in melanin production in melanocytes.

Its subcellular location is the cell membrane. Receptor for MSH (alpha, beta and gamma) and ACTH. The activity of this receptor is mediated by G proteins which activate adenylate cyclase. Mediates melanogenesis, the production of eumelanin (black/brown) and phaeomelanin (red/yellow), via regulation of cAMP signaling in melanocytes. In Colobus guereza (Mantled guereza), this protein is Melanocyte-stimulating hormone receptor (MC1R).